The chain runs to 90 residues: Co-chaperonin GroES (90 aa).

The protein belongs to the GroES chaperonin family. As to quaternary structure, heptamer of 7 subunits arranged in a ring. Interacts with the chaperonin GroEL.

The protein localises to the cytoplasm. In terms of biological role, together with the chaperonin GroEL, plays an essential role in assisting protein folding. The GroEL-GroES system forms a nano-cage that allows encapsulation of the non-native substrate proteins and provides a physical environment optimized to promote and accelerate protein folding. GroES binds to the apical surface of the GroEL ring, thereby capping the opening of the GroEL channel. This Helicobacter hepaticus (strain ATCC 51449 / 3B1) protein is Co-chaperonin GroES.